Reading from the N-terminus, the 131-residue chain is UPF0102 protein Ent638_3585 (131 aa).

Residues 1–20 (MAQIPAGADRPGKLSRKQTG) form a disordered region.

Belongs to the UPF0102 family.

This is UPF0102 protein Ent638_3585 from Enterobacter sp. (strain 638).